A 530-amino-acid chain; its full sequence is Hyccin 2 (530 aa).

2 positions are modified to phosphothreonine: threonine 30 and threonine 306. Phosphoserine occurs at positions 321 and 341. The disordered stretch occupies residues 328–410 (RREGAEGVNG…DSVVRKQYVQ (83 aa)). Polar residues predominate over residues 353–373 (SGASLSSQPIGTKPSSSSQRG). Serine 430, serine 442, serine 444, and serine 491 each carry phosphoserine. A disordered region spans residues 502–530 (EGKELLSPGAPLTKQSRSPSFNMQLISQV). Residues 514–530 (TKQSRSPSFNMQLISQV) are compositionally biased toward polar residues.

This sequence belongs to the Hyccin family. As to quaternary structure, component of a phosphatidylinositol 4-kinase (PI4K) complex, composed of PI4KA, EFR3 (EFR3A or EFR3B), TTC7 (TTC7A or TTC7B) and HYCC (HYCC1 or HYCC2).

Its subcellular location is the cytoplasm. The protein resides in the cytosol. It localises to the cell membrane. Functionally, component of a complex required to localize phosphatidylinositol 4-kinase (PI4K) to the plasma membrane. This chain is Hyccin 2, found in Homo sapiens (Human).